A 422-amino-acid polypeptide reads, in one-letter code: Validoxylamine A glucosyltransferase (422 aa).

The protein belongs to the glycosyltransferase 2 family. Requires Mn(2+) as cofactor.

It catalyses the reaction validoxylamine A + UDP-alpha-D-glucose = validamycin A + UDP + H(+). Its function is as follows. Involved in the biosynthesis of the antifungal agent validamycin A. Catalyzes the final attachment of glucose from UDP-alpha-D-glucose to validoxylamine A to yield validamycin A. UDP-glucose is the most efficient glycosyl donor, whereas GDP-glucose and ADP-glucose are much less efficient. ValG also utilizes UDP-galactose as substrate to produce the new validamycin analog, 4''-epi-validamycin A. In Streptomyces hygroscopicus subsp. jinggangensis (strain 5008), this protein is Validoxylamine A glucosyltransferase.